A 409-amino-acid polypeptide reads, in one-letter code: Tryptophan synthase beta chain (409 aa).

Lysine 104 carries the post-translational modification N6-(pyridoxal phosphate)lysine.

It belongs to the TrpB family. As to quaternary structure, tetramer of two alpha and two beta chains. Requires pyridoxal 5'-phosphate as cofactor.

The enzyme catalyses (1S,2R)-1-C-(indol-3-yl)glycerol 3-phosphate + L-serine = D-glyceraldehyde 3-phosphate + L-tryptophan + H2O. The protein operates within amino-acid biosynthesis; L-tryptophan biosynthesis; L-tryptophan from chorismate: step 5/5. The beta subunit is responsible for the synthesis of L-tryptophan from indole and L-serine. This is Tryptophan synthase beta chain from Trichodesmium erythraeum (strain IMS101).